The following is a 481-amino-acid chain: Ankyrin repeat, SAM and basic leucine zipper domain-containing protein 1 (481 aa).

The segment covering 1-10 (MASGALRGLA) has biased composition (low complexity). The disordered stretch occupies residues 1–23 (MASGALRGLAVAGGGESSDSEDD). A phosphoserine mark is found at Ser17, Ser18, and Ser20. ANK repeat units follow at residues 45–74 (EKSE…SVDS), 78–107 (YGWT…NASF), 110–144 (DKQT…DPNI), 148–177 (RLMT…EVNA), 181–210 (NGYT…NKML), and 214–243 (DGKI…PLEG). One can recognise an SAM domain in the interval 272–334 (SYTAFGDLEI…KILSALKELE (63 aa)).

Interacts with DDX4, PIWIL1, RANBP9 and TDRD1.

It localises to the cytoplasm. Plays a central role during spermatogenesis by repressing transposable elements and preventing their mobilization, which is essential for the germline integrity. Acts via the piRNA metabolic process, which mediates the repression of transposable elements during meiosis by forming complexes composed of piRNAs and Piwi proteins and governs the methylation and subsequent repression of transposons. Its association with pi-bodies suggests a participation in the primary piRNAs metabolic process. Required prior to the pachytene stage to facilitate the production of multiple types of piRNAs, including those associated with repeats involved in the regulation of retrotransposons. May act by mediating protein-protein interactions during germ cell maturation. In Eulemur macaco macaco (Black lemur), this protein is Ankyrin repeat, SAM and basic leucine zipper domain-containing protein 1 (ASZ1).